A 300-amino-acid polypeptide reads, in one-letter code: Porphobilinogen deaminase (300 aa).

Cys243 carries the S-(dipyrrolylmethanemethyl)cysteine modification.

It belongs to the HMBS family. In terms of assembly, monomer. Dipyrromethane serves as cofactor.

The enzyme catalyses 4 porphobilinogen + H2O = hydroxymethylbilane + 4 NH4(+). The protein operates within porphyrin-containing compound metabolism; protoporphyrin-IX biosynthesis; coproporphyrinogen-III from 5-aminolevulinate: step 2/4. Its function is as follows. Tetrapolymerization of the monopyrrole PBG into the hydroxymethylbilane pre-uroporphyrinogen in several discrete steps. In Clostridium novyi (strain NT), this protein is Porphobilinogen deaminase.